Here is a 140-residue protein sequence, read N- to C-terminus: Transmembrane protein 107 (140 aa).

2 helical membrane passes run 7–27 and 53–73; these read LVPSRFLTLLAHLVVVITLFW and LVAALSVTLGLFAVELAGFLS. An N-linked (GlcNAc...) asparagine glycan is attached at asparagine 79. 2 helical membrane passes run 83–103 and 113–133; these read SLISIGAHCSASVALSFFIFE and IFVFCSALPAVTEMALFVTVF.

Part of the tectonic-like complex (also named B9 complex). Interacts with TMEM237, TMEM231, MKS1 and TMEM216.

It localises to the membrane. The protein resides in the cell projection. It is found in the cilium. Its function is as follows. Plays a role in cilia formation and embryonic patterning. Requires for normal Sonic hedgehog (Shh) signaling in the neural tube and acts in combination with GLI2 and GLI3 to pattern ventral and intermediate neuronal cell types. During ciliogenesis regulates the ciliary transition zone localization of some MKS complex proteins. The chain is Transmembrane protein 107 from Homo sapiens (Human).